The sequence spans 430 residues: Enolase (430 aa).

Residue glutamine 162 participates in (2R)-2-phosphoglycerate binding. Glutamate 204 serves as the catalytic Proton donor. Residues aspartate 242, glutamate 289, and aspartate 316 each coordinate Mg(2+). (2R)-2-phosphoglycerate-binding residues include lysine 341, arginine 370, serine 371, and lysine 392. Lysine 341 acts as the Proton acceptor in catalysis.

This sequence belongs to the enolase family. Mg(2+) serves as cofactor.

It is found in the cytoplasm. Its subcellular location is the secreted. The protein resides in the cell surface. The enzyme catalyses (2R)-2-phosphoglycerate = phosphoenolpyruvate + H2O. The protein operates within carbohydrate degradation; glycolysis; pyruvate from D-glyceraldehyde 3-phosphate: step 4/5. Catalyzes the reversible conversion of 2-phosphoglycerate (2-PG) into phosphoenolpyruvate (PEP). It is essential for the degradation of carbohydrates via glycolysis. The protein is Enolase of Flavobacterium johnsoniae (strain ATCC 17061 / DSM 2064 / JCM 8514 / BCRC 14874 / CCUG 350202 / NBRC 14942 / NCIMB 11054 / UW101) (Cytophaga johnsonae).